A 415-amino-acid chain; its full sequence is Serine hydroxymethyltransferase (415 aa).

Residues leucine 119 and 123-125 (GHL) each bind (6S)-5,6,7,8-tetrahydrofolate. Lysine 228 bears the N6-(pyridoxal phosphate)lysine mark. (6S)-5,6,7,8-tetrahydrofolate is bound at residue 353-355 (SPF).

It belongs to the SHMT family. As to quaternary structure, homodimer. Requires pyridoxal 5'-phosphate as cofactor.

Its subcellular location is the cytoplasm. It carries out the reaction (6R)-5,10-methylene-5,6,7,8-tetrahydrofolate + glycine + H2O = (6S)-5,6,7,8-tetrahydrofolate + L-serine. It functions in the pathway one-carbon metabolism; tetrahydrofolate interconversion. Its pathway is amino-acid biosynthesis; glycine biosynthesis; glycine from L-serine: step 1/1. Its function is as follows. Catalyzes the reversible interconversion of serine and glycine with tetrahydrofolate (THF) serving as the one-carbon carrier. Also exhibits THF-independent aldolase activity toward beta-hydroxyamino acids, producing glycine and aldehydes, via a retro-aldol mechanism. In Halorubrum lacusprofundi (strain ATCC 49239 / DSM 5036 / JCM 8891 / ACAM 34), this protein is Serine hydroxymethyltransferase.